The chain runs to 150 residues: Ribonuclease K6 (150 aa).

The N-terminal stretch at 1–23 (MVLCFPLLLLLLVLWGPVCLLHA) is a signal peptide. H38 (proton acceptor) is an active-site residue. 4 disulfides stabilise this stretch: C46–C104, C60–C114, C78–C129, and C85–C92. N55 carries an N-linked (GlcNAc...) asparagine glycan. Substrate-binding positions include 61-65 (KHQNT) and K86. N100 carries an N-linked (GlcNAc...) asparagine glycan. R105 serves as a coordination point for substrate. The active-site Proton donor is the H145.

It belongs to the pancreatic ribonuclease family. In terms of assembly, interacts (via N-terminus) with bacterial lipopolysaccharide (LPS).

It is found in the secreted. It localises to the lysosome. The protein localises to the cytoplasmic granule. In terms of biological role, ribonuclease which shows a preference for the pyrimidines uridine and cytosine. Has potent antibacterial activity against a range of Gram-positive and Gram-negative bacteria, including P.aeruginosa, A.baumanii, M.luteus, S.aureus, E.faecalis, E.faecium, S.saprophyticus and E.coli. Causes loss of bacterial membrane integrity, and also promotes agglutination of Gram-negative bacteria. Probably contributes to urinary tract sterility. Bactericidal activity is independent of RNase activity. The sequence is that of Ribonuclease K6 (RNASE6) from Miopithecus talapoin (Angolan talapoin).